Consider the following 169-residue polypeptide: Dihydrofolate reductase type 8 (169 aa).

One can recognise a DHFR domain in the interval 3 to 169 (ELHAILAATA…FTYRKKELTE (167 aa)).

The protein belongs to the dihydrofolate reductase family. Homodimer.

The enzyme catalyses (6S)-5,6,7,8-tetrahydrofolate + NADP(+) = 7,8-dihydrofolate + NADPH + H(+). It functions in the pathway cofactor biosynthesis; tetrahydrofolate biosynthesis; 5,6,7,8-tetrahydrofolate from 7,8-dihydrofolate: step 1/1. In terms of biological role, key enzyme in folate metabolism. Catalyzes an essential reaction for de novo glycine and purine synthesis, and for DNA precursor synthesis. This Escherichia coli protein is Dihydrofolate reductase type 8 (dhfrVIII).